The chain runs to 407 residues: Imidazolonepropionase (407 aa).

Fe(3+)-binding residues include His74 and His76. His74 and His76 together coordinate Zn(2+). 4-imidazolone-5-propanoate contacts are provided by Arg83, Tyr146, and His179. Tyr146 contributes to the N-formimidoyl-L-glutamate binding site. His244 is a Fe(3+) binding site. His244 is a Zn(2+) binding site. A 4-imidazolone-5-propanoate-binding site is contributed by Gln247. Residue Asp319 coordinates Fe(3+). Asp319 contacts Zn(2+). Asn321 and Gly323 together coordinate N-formimidoyl-L-glutamate. Thr324 is a binding site for 4-imidazolone-5-propanoate.

It belongs to the metallo-dependent hydrolases superfamily. HutI family. Zn(2+) is required as a cofactor. Requires Fe(3+) as cofactor.

Its subcellular location is the cytoplasm. The catalysed reaction is 4-imidazolone-5-propanoate + H2O = N-formimidoyl-L-glutamate. It functions in the pathway amino-acid degradation; L-histidine degradation into L-glutamate; N-formimidoyl-L-glutamate from L-histidine: step 3/3. Catalyzes the hydrolytic cleavage of the carbon-nitrogen bond in imidazolone-5-propanoate to yield N-formimidoyl-L-glutamate. It is the third step in the universal histidine degradation pathway. The polypeptide is Imidazolonepropionase (Salmonella paratyphi A (strain ATCC 9150 / SARB42)).